A 199-amino-acid chain; its full sequence is Large ribosomal subunit protein uL4 (199 aa).

This sequence belongs to the universal ribosomal protein uL4 family. Part of the 50S ribosomal subunit.

One of the primary rRNA binding proteins, this protein initially binds near the 5'-end of the 23S rRNA. It is important during the early stages of 50S assembly. It makes multiple contacts with different domains of the 23S rRNA in the assembled 50S subunit and ribosome. Its function is as follows. Forms part of the polypeptide exit tunnel. This chain is Large ribosomal subunit protein uL4, found in Aquifex aeolicus (strain VF5).